Reading from the N-terminus, the 86-residue chain is Alpha-mammal toxin Ts3 (86 aa).

The first 19 residues, M1–G19, serve as a signal peptide directing secretion. The LCN-type CS-alpha/beta domain occupies K21–K82. Intrachain disulfides connect C31–C81, C35–C57, C43–C64, and C47–C66. S83 is modified (serine amide).

In terms of tissue distribution, expressed by the venom gland.

The protein resides in the secreted. Functionally, alpha toxins bind voltage-independently at site-3 of sodium channels (Nav) and inhibit the inactivation of the activated channels, thereby blocking neuronal transmission. This synthetic toxin inhibits inactivation of rat Nav1.4/SCN4A (when tested at 201 nM). In addition, it has been shown to cause a persistent sodium channel activation in nitrergic inhibitory fibers innervating the rabbit corpus cavernosum, resulting in NO release and cavernosal smooth muscle relaxation. This toxin is active against mammals. In terms of biological role, this synthetic peptide with a Ser at position 31 (C12S) acts as a bradykinin-potentiating peptide (BPP). Induces endothelium-dependent vasodilation that is reverted by NO synthase inhibitor, suggesting it activates molecular targets on vascular endothelium leading to NO production and vasodilation. It appears to induce vasodilation through muscarinic acetylcholine receptors (AChR) M2 (CHRM2) and M3 (CHRM3). Does not inhibit the angiotensin-converting enzyme (ACE). Does not act via bradykinin B2 receptor. The polypeptide is Alpha-mammal toxin Ts3 (Tityus serrulatus (Brazilian scorpion)).